A 358-amino-acid chain; its full sequence is MSKGLPEARTDTAMSELVPEPRPKPAVPMKPVSINSNLLGCIGIDTIIEQMRKKTMKTGFDFNIMVVGQSGLGKSTLVNTLFKSQVSRKASSWNREEKIPKTVEIKAIGHVIEEGGVKMKLTVIDTPGFGDQINNENCWEPIEKYINEQYEKFLKEEVNIARKKRIPDTRVHCCLYFISPTGHSLRPLDLEFMKHLSKVVNVIPVIAKADTMTLEEKSEFKQRVRKELEVNGIEFYPQKEFDEDLEDKTENDKIRQESMPFAVVGSDKEYQVNGKRVLGRKTPWGIIEVENLNHCEFALLRDFVIRTHLQDLKEVTHNIHYETYRAKRLNDNGGLPPGEGLLGTVLPPVPATPCPTAE.

Positions 1 to 10 (MSKGLPEART) are enriched in basic and acidic residues. Residues 1-29 (MSKGLPEARTDTAMSELVPEPRPKPAVPM) are disordered. The Septin-type G domain occupies 58–331 (TGFDFNIMVV…ETYRAKRLND (274 aa)). The segment at 68–75 (GQSGLGKS) is G1 motif. 68–75 (GQSGLGKS) contributes to the GTP binding site. Ser-91 is modified (phosphoserine). Thr-102 provides a ligand contact to GTP. A G3 motif region spans residues 125-128 (DTPG). Positions 207–210 (AKAD) are G4 motif. GTP contacts are provided by residues 208–216 (KADTMTLEE), Gly-265, and Arg-280.

It belongs to the TRAFAC class TrmE-Era-EngA-EngB-Septin-like GTPase superfamily. Septin GTPase family. As to quaternary structure, septins polymerize into heterooligomeric protein complexes that form filaments, and can associate with cellular membranes, actin filaments and microtubules. GTPase activity is required for filament formation. In terms of processing, phosphorylated by PKG on serine residues. Phosphorylated by PKG on Ser-91. In terms of tissue distribution, brain-specific, with highest expression in the hippocampal CA3 region (at protein level).

It localises to the cytoplasm. The protein localises to the cytoskeleton. The protein resides in the synapse. In terms of biological role, filament-forming cytoskeletal GTPase. May play a role in cytokinesis (Potential). The protein is Neuronal-specific septin-3 of Rattus norvegicus (Rat).